The chain runs to 466 residues: Tissue alpha-L-fucosidase (466 aa).

Positions 1 to 31 are cleaved as a signal peptide; sequence MRAPGMRSRPAGPALLLLLLFLGAAESVRRA. Phosphothreonine is present on Thr-170. N-linked (GlcNAc...) asparagine glycans are attached at residues Asn-241, Asn-268, and Asn-382.

Belongs to the glycosyl hydrolase 29 family. Homotetramer.

The protein localises to the lysosome. It catalyses the reaction an alpha-L-fucoside + H2O = L-fucose + an alcohol. The catalysed reaction is a neolactoside IV(2)-alpha-Fuc-nLc4Cer(d18:1(4E)) + H2O = a neolactoside nLc4Cer(d18:1(4E)) + L-fucose. The enzyme catalyses a neolactoside IV(2)-alpha-Fuc-nLc4Cer(d18:0) + H2O = a neolactoside nLc4Cer(d18:0) + L-fucose. In terms of biological role, alpha-L-fucosidase is responsible for hydrolyzing the alpha-1,6-linked fucose joined to the reducing-end N-acetylglucosamine of the carbohydrate moieties of glycoproteins. The polypeptide is Tissue alpha-L-fucosidase (Homo sapiens (Human)).